We begin with the raw amino-acid sequence, 665 residues long: non-specific serine/threonine protein kinase (665 aa).

The Protein kinase domain occupies 145 to 597 (FDVHCRIGSG…AEEALKHPFF (453 aa)). ATP-binding positions include 151–159 (IGSGTFSTV) and Lys-181. The Proton acceptor role is filled by Asp-268.

This sequence belongs to the protein kinase superfamily. Ser/Thr protein kinase family. In terms of assembly, interacts with chif (via N-terminus).

It carries out the reaction L-seryl-[protein] + ATP = O-phospho-L-seryl-[protein] + ADP + H(+). The catalysed reaction is L-threonyl-[protein] + ATP = O-phospho-L-threonyl-[protein] + ADP + H(+). Its function is as follows. Probable serine/threonine protein kinase that forms a complex with the N-terminal peptide of the chiffon protein and may be involved in regulating meiotic processes in the male testis. The sequence is that of non-specific serine/threonine protein kinase from Drosophila melanogaster (Fruit fly).